The chain runs to 201 residues: CASP-like protein 2A1 (201 aa).

The interval 1 to 27 (MEKRDKGSSPMATMMGSRDENEDVENT) is disordered. The Cytoplasmic portion of the chain corresponds to 1-30 (MEKRDKGSSPMATMMGSRDENEDVENTTRT). The helical transmembrane segment at 31 to 51 (AETMLRLVPMALCVSALVVML) threads the bilayer. The Extracellular portion of the chain corresponds to 52–72 (KNTQTNDYGSLSYSDLGAFRY). Residues 73–93 (LVHVNGICAGYSLLSAVIVAM) traverse the membrane as a helical segment. The Cytoplasmic portion of the chain corresponds to 94–101 (PRASTMPR). The helical transmembrane segment at 102–122 (AWAFFLLDQVLTYVILAAGTV) threads the bilayer. The Extracellular portion of the chain corresponds to 123–152 (STEVLYLASKGDTTITWSEACVSFGGFCHK). A helical transmembrane segment spans residues 153-173 (ALISIVITFVVVICYAALSLL). Topologically, residues 174–201 (SSYKLFSKYDSPVLTYPGKGIEIATFHG) are cytoplasmic.

This sequence belongs to the Casparian strip membrane proteins (CASP) family. Homodimer and heterodimers.

The protein resides in the cell membrane. This is CASP-like protein 2A1 from Populus trichocarpa (Western balsam poplar).